Reading from the N-terminus, the 285-residue chain is 4-hydroxybenzoate octaprenyltransferase (285 aa).

Helical transmembrane passes span 20 to 37 (IGIY…WLAA), 96 to 116 (FFFV…PFTI), 138 to 158 (WPQA…FAAI), 166 to 186 (AWVI…AYAV), 211 to 231 (IIGF…DLFG), 234 to 254 (WLYY…QYLL), and 262 to 282 (AFKA…GIML).

Belongs to the UbiA prenyltransferase family. Mg(2+) serves as cofactor.

It localises to the cell inner membrane. The enzyme catalyses all-trans-octaprenyl diphosphate + 4-hydroxybenzoate = 4-hydroxy-3-(all-trans-octaprenyl)benzoate + diphosphate. Its pathway is cofactor biosynthesis; ubiquinone biosynthesis. Its function is as follows. Catalyzes the prenylation of para-hydroxybenzoate (PHB) with an all-trans polyprenyl group. Mediates the second step in the final reaction sequence of ubiquinone-8 (UQ-8) biosynthesis, which is the condensation of the polyisoprenoid side chain with PHB, generating the first membrane-bound Q intermediate 3-octaprenyl-4-hydroxybenzoate. This chain is 4-hydroxybenzoate octaprenyltransferase, found in Hydrogenovibrio crunogenus (strain DSM 25203 / XCL-2) (Thiomicrospira crunogena).